The primary structure comprises 376 residues: Ribonucleoside-diphosphate reductase subunit beta (376 aa).

Residues Asp-85, Glu-116, and His-119 each contribute to the Fe cation site. Tyr-123 is an active-site residue. The Fe cation site is built by Glu-205, Glu-239, and His-242.

It belongs to the ribonucleoside diphosphate reductase small chain family. In terms of assembly, tetramer of two alpha and two beta subunits. It depends on Fe cation as a cofactor.

It carries out the reaction a 2'-deoxyribonucleoside 5'-diphosphate + [thioredoxin]-disulfide + H2O = a ribonucleoside 5'-diphosphate + [thioredoxin]-dithiol. Provides the precursors necessary for DNA synthesis. Catalyzes the biosynthesis of deoxyribonucleotides from the corresponding ribonucleotides. The chain is Ribonucleoside-diphosphate reductase subunit beta (nrdB) from Buchnera aphidicola subsp. Acyrthosiphon pisum (strain APS) (Acyrthosiphon pisum symbiotic bacterium).